A 396-amino-acid polypeptide reads, in one-letter code: Non-homologous end joining protein Ku (396 aa).

Positions 9 to 189 constitute a Ku domain; sequence ISFGLVSIPV…DVAVRPQELS (181 aa). Residues 278 to 288 show a composition bias toward low complexity; the sequence is DGDAGPAAAGV. The disordered stretch occupies residues 278–396; sequence DGDAGPAAAG…SKTPPTRRSA (119 aa). Residues 294–312 are compositionally biased toward basic and acidic residues; the sequence is DDKASDDKASDDKASDGRR. Residues 315-336 are compositionally biased toward polar residues; it reads RTSSVKGASSAPGTRSTARKTP. Positions 337 to 396 are enriched in low complexity; it reads SSTRSTAKTNAATKTPPAKTSAAKASAAKTSAAKATSSRTAPKTAPRTPTSKTPPTRRSA.

The protein belongs to the prokaryotic Ku family. Homodimer. Interacts with LigD.

Its function is as follows. With LigD forms a non-homologous end joining (NHEJ) DNA repair enzyme, which repairs dsDNA breaks with reduced fidelity. Binds linear dsDNA with 5'- and 3'- overhangs but not closed circular dsDNA nor ssDNA. Recruits and stimulates the ligase activity of LigD. The sequence is that of Non-homologous end joining protein Ku from Frankia casuarinae (strain DSM 45818 / CECT 9043 / HFP020203 / CcI3).